The primary structure comprises 237 residues: MGAQWKAKGKAQAADARGKLFGRLAKDIMVAARGGADPASNSRLRLVVEQARKVSMPKDTLERAIKKGAGLTGEAVHFEHVMYEGFAPHQVPVMVECLTDNVKRTAPEMRVLFRKGHLGASGSVAWDFDHVGMIEAEPVVAGSDPEVAAIEAGAEDFEPGHEEGTTLFLTAPTDLDLVSRALPAQGFTVISAKLGYKPKNPIDPASLDPAHLEEVEAFLAAIDANDDVQNVFVGLAG.

This sequence belongs to the TACO1 family.

The protein localises to the cytoplasm. This chain is Probable transcriptional regulatory protein Bpro_2928, found in Polaromonas sp. (strain JS666 / ATCC BAA-500).